A 460-amino-acid chain; its full sequence is MPKKKLWGGRFHEKTASPVEQYTQSISYDKKMYAQDIAGSKAHASMLGRQGILTSEEVLLLLNGLDSIQKEIETDTFPWKIELEDVHMNIESRLTDLIGTVGEKLHTGRSRNDQVALDFRLFVSDNISLWKRQLLELIGIFVAKAEEYKDTILPGFTHLQPAQPVSLAQHLLAYAWMFKRDVQRVYECNQRVRVSPLGAAALSGTTYNIDPFFIANELHMYGVFDNSMDAVSDRDFVIEALFCASVIMMHLSRFCEELIIWSNPAFGFVQLPDAYATGSSIMPQKKNPDVAEIMRGKVGRVYGALYNMLTILKALPLTYNRDLQEDKEPFFDTNTTIQSSLSIMADMLAAITFNKNKMASALSDGYLNATELADYLVTKGLSFREAHHTTGSIVALAEQQKIPLEELSLQDFQSICDKIESDVFHVLDYHVSIERRKSTGGTGYHSIEKQIEKLKSWLTQ.

Belongs to the lyase 1 family. Argininosuccinate lyase subfamily.

The protein resides in the cytoplasm. It carries out the reaction 2-(N(omega)-L-arginino)succinate = fumarate + L-arginine. The protein operates within amino-acid biosynthesis; L-arginine biosynthesis; L-arginine from L-ornithine and carbamoyl phosphate: step 3/3. In Lawsonia intracellularis (strain PHE/MN1-00), this protein is Argininosuccinate lyase.